Reading from the N-terminus, the 378-residue chain is Ribosomal RNA large subunit methyltransferase G (378 aa).

Belongs to the methyltransferase superfamily. RlmG family.

Its subcellular location is the cytoplasm. It catalyses the reaction guanosine(1835) in 23S rRNA + S-adenosyl-L-methionine = N(2)-methylguanosine(1835) in 23S rRNA + S-adenosyl-L-homocysteine + H(+). In terms of biological role, specifically methylates the guanine in position 1835 (m2G1835) of 23S rRNA. The polypeptide is Ribosomal RNA large subunit methyltransferase G (Salmonella heidelberg (strain SL476)).